The following is a 244-amino-acid chain: Globin-like protein 9 (244 aa).

The interval 1-38 (MRRMAKYDRSYSMQDAHGPNGLARRGTQRGCSRSKSTR) is disordered. A Globin domain is found at 47–200 (SLTFSQKQAL…LIDELRGGFE (154 aa)). Heme contacts are provided by His111 and His143.

Belongs to the globin family.

This chain is Globin-like protein 9, found in Caenorhabditis briggsae.